A 371-amino-acid chain; its full sequence is Homeobox protein Nkx-2.1 (371 aa).

A DNA-binding region (homeobox) is located at residues 161–220 (RRKRRVLFSQAQVYELERRFKQQKYLSAPEREHLASMIHLTPTQVKIWFQNHRYKMKRQA). Disordered stretches follow at residues 219–294 (QAKD…QHQA) and 310–339 (GAGL…SPAA). Positions 233 to 243 (SGGGGGGGGTG) are enriched in gly residues. Residues 244-253 (CPQQQQAQQQ) are compositionally biased toward low complexity. A Phosphoserine modification is found at Ser-254. A compositionally biased stretch (low complexity) spans 272–294 (AGAPAPGAASLQGHAQQQAQHQA).

This sequence belongs to the NK-2 homeobox family. As to quaternary structure, interacts with WWTR1. Post-translationally, phosphorylated on serine residues by STK3/MST2. As to expression, thyroid and lung.

Its subcellular location is the nucleus. Transcription factor that binds and activates the promoter of thyroid specific genes such as thyroglobulin, thyroperoxidase, and thyrotropin receptor. Crucial in the maintenance of the thyroid differentiation phenotype. May play a role in lung development and surfactant homeostasis. Forms a regulatory loop with GRHL2 that coordinates lung epithelial cell morphogenesis and differentiation. Activates the transcription of GNRHR and plays a role in enhancing the circadian oscillation of its gene expression. Represses the transcription of the circadian transcriptional repressor NR1D1. The chain is Homeobox protein Nkx-2.1 from Homo sapiens (Human).